The chain runs to 385 residues: D-alanine--D-alanine ligase (385 aa).

In terms of domain architecture, ATP-grasp spans 165–375 (KRVFTSFGLK…YPELVDRLVE (211 aa)). 201-256 (AGEHGWPLFVKPARAGSSIGITKVDDLAGLDEAVAEAQRHDPKIIVEALLRGREIE) is a binding site for ATP. 3 residues coordinate Mg(2+): aspartate 329, glutamate 342, and asparagine 344.

It belongs to the D-alanine--D-alanine ligase family. Requires Mg(2+) as cofactor. Mn(2+) is required as a cofactor.

The protein resides in the cytoplasm. The catalysed reaction is 2 D-alanine + ATP = D-alanyl-D-alanine + ADP + phosphate + H(+). It functions in the pathway cell wall biogenesis; peptidoglycan biosynthesis. Its function is as follows. Cell wall formation. The protein is D-alanine--D-alanine ligase of Streptomyces avermitilis (strain ATCC 31267 / DSM 46492 / JCM 5070 / NBRC 14893 / NCIMB 12804 / NRRL 8165 / MA-4680).